Here is a 217-residue protein sequence, read N- to C-terminus: 3,4-dihydroxy-2-butanone 4-phosphate synthase (217 aa).

Residues 40–41, Asp45, 153–157, and Glu177 contribute to the D-ribulose 5-phosphate site; these read RE and RRGHT. Glu41 provides a ligand contact to Mg(2+). His156 contacts Mg(2+).

This sequence belongs to the DHBP synthase family. As to quaternary structure, homodimer. Mg(2+) is required as a cofactor. The cofactor is Mn(2+).

The catalysed reaction is D-ribulose 5-phosphate = (2S)-2-hydroxy-3-oxobutyl phosphate + formate + H(+). Its pathway is cofactor biosynthesis; riboflavin biosynthesis; 2-hydroxy-3-oxobutyl phosphate from D-ribulose 5-phosphate: step 1/1. Its function is as follows. Catalyzes the conversion of D-ribulose 5-phosphate to formate and 3,4-dihydroxy-2-butanone 4-phosphate. This chain is 3,4-dihydroxy-2-butanone 4-phosphate synthase, found in Aliivibrio fischeri (Vibrio fischeri).